The following is a 567-amino-acid chain: Oxygen-dependent choline dehydrogenase (567 aa).

FAD is bound at residue 4–33 (DYIIIGAGSAGNVLAARLTEDADVTVLLLE). His-473 serves as the catalytic Proton acceptor.

The protein belongs to the GMC oxidoreductase family. The cofactor is FAD.

The catalysed reaction is choline + A = betaine aldehyde + AH2. The enzyme catalyses betaine aldehyde + NAD(+) + H2O = glycine betaine + NADH + 2 H(+). The protein operates within amine and polyamine biosynthesis; betaine biosynthesis via choline pathway; betaine aldehyde from choline (cytochrome c reductase route): step 1/1. Its function is as follows. Involved in the biosynthesis of the osmoprotectant glycine betaine. Catalyzes the oxidation of choline to betaine aldehyde and betaine aldehyde to glycine betaine at the same rate. This Yersinia pestis bv. Antiqua (strain Antiqua) protein is Oxygen-dependent choline dehydrogenase.